The chain runs to 197 residues: RNA pyrophosphohydrolase (197 aa).

One can recognise a Nudix hydrolase domain in the interval 6–149 (GYRPNVGIVI…KRDVYRRAMK (144 aa)). A Nudix box motif is present at residues 38-59 (GGINEGETPEQAMFRELFEEVG). The interval 170-197 (ETKKAETGKKQPYYHKYAPQNKKGRKRR) is disordered.

This sequence belongs to the Nudix hydrolase family. RppH subfamily. A divalent metal cation is required as a cofactor.

Its function is as follows. Accelerates the degradation of transcripts by removing pyrophosphate from the 5'-end of triphosphorylated RNA, leading to a more labile monophosphorylated state that can stimulate subsequent ribonuclease cleavage. This is RNA pyrophosphohydrolase from Actinobacillus succinogenes (strain ATCC 55618 / DSM 22257 / CCUG 43843 / 130Z).